A 55-amino-acid chain; its full sequence is UPF0434 protein Erum1340/ERWE_CDS_01300 (55 aa).

Belongs to the UPF0434 family.

In Ehrlichia ruminantium (strain Welgevonden), this protein is UPF0434 protein Erum1340/ERWE_CDS_01300.